The primary structure comprises 156 residues: MNLNATILGQAIAFILFVWFCMKYVWPPLMAAIEKRQKEIADGLASAERAHKDLDLAKASATDQLKKAKAEVQVIIEQANKRRAQILDEAKTEAEQERTKIVAQAQAEIEAERKRAREELRKQVAILAVAGAEKIIERSVDEAANSDIVDKLVAEL.

Residues 11-31 traverse the membrane as a helical segment; that stretch reads AIAFILFVWFCMKYVWPPLMA.

Belongs to the ATPase B chain family. As to quaternary structure, F-type ATPases have 2 components, F(1) - the catalytic core - and F(0) - the membrane proton channel. F(1) has five subunits: alpha(3), beta(3), gamma(1), delta(1), epsilon(1). F(0) has three main subunits: a(1), b(2) and c(10-14). The alpha and beta chains form an alternating ring which encloses part of the gamma chain. F(1) is attached to F(0) by a central stalk formed by the gamma and epsilon chains, while a peripheral stalk is formed by the delta and b chains.

The protein localises to the cell inner membrane. In terms of biological role, f(1)F(0) ATP synthase produces ATP from ADP in the presence of a proton or sodium gradient. F-type ATPases consist of two structural domains, F(1) containing the extramembraneous catalytic core and F(0) containing the membrane proton channel, linked together by a central stalk and a peripheral stalk. During catalysis, ATP synthesis in the catalytic domain of F(1) is coupled via a rotary mechanism of the central stalk subunits to proton translocation. Its function is as follows. Component of the F(0) channel, it forms part of the peripheral stalk, linking F(1) to F(0). This Salmonella gallinarum (strain 287/91 / NCTC 13346) protein is ATP synthase subunit b.